The sequence spans 218 residues: Glutathione S-transferase Mu 4 (218 aa).

One can recognise a GST N-terminal domain in the interval 2 to 88 (SMTLGYWDIR…YIARKHNLCG (87 aa)). Residues 7–8 (YW), 46–50 (WLNEK), 59–60 (NL), and 72–73 (QS) each bind glutathione. Positions 90–208 (TEEEKIRVDI…KSSRFLPKPL (119 aa)) constitute a GST C-terminal domain. Residue Tyr-116 participates in substrate binding.

The protein belongs to the GST superfamily. Mu family. As to quaternary structure, homodimer. In terms of tissue distribution, expressed in a wide variety of tissues.

The protein resides in the cytoplasm. It carries out the reaction RX + glutathione = an S-substituted glutathione + a halide anion + H(+). It catalyses the reaction 1-chloro-2,4-dinitrobenzene + glutathione = 2,4-dinitrophenyl-S-glutathione + chloride + H(+). The catalysed reaction is (13S,14S)-epoxy-(4Z,7Z,9E,11E,16Z,19Z)-docosahexaenoate + glutathione = (13R)-S-glutathionyl-(14S)-hydroxy-(4Z,7Z,9E,11E,16Z,19Z)-docosahexaenoate. The enzyme catalyses leukotriene C4 = leukotriene A4 + glutathione. In terms of biological role, conjugation of reduced glutathione to a wide number of exogenous and endogenous hydrophobic electrophiles. Catalyzes the conjugation of leukotriene A4 with reduced glutathione (GSH) to form leukotriene C4. Can also catalyze the transfer of a glutathionyl group from glutathione (GSH) to 13(S),14(S)-epoxy-docosahexaenoic acid to form maresin conjugate in tissue regeneration 1 (MCTR1), a bioactive lipid mediator that possess potent anti-inflammatory and proresolving actions. In Homo sapiens (Human), this protein is Glutathione S-transferase Mu 4 (GSTM4).